Here is a 104-residue protein sequence, read N- to C-terminus: uncharacterized protein (104 aa).

This sequence to A.aeolicus AQ_377.

This is an uncharacterized protein from Archaeoglobus fulgidus (strain ATCC 49558 / DSM 4304 / JCM 9628 / NBRC 100126 / VC-16).